The following is a 117-amino-acid chain: Holo-[acyl-carrier-protein] synthase (117 aa).

Residues aspartate 8 and glutamate 55 each contribute to the Mg(2+) site.

This sequence belongs to the P-Pant transferase superfamily. AcpS family. Mg(2+) serves as cofactor.

The protein resides in the cytoplasm. It carries out the reaction apo-[ACP] + CoA = holo-[ACP] + adenosine 3',5'-bisphosphate + H(+). Transfers the 4'-phosphopantetheine moiety from coenzyme A to a Ser of acyl-carrier-protein. In Finegoldia magna (strain ATCC 29328 / DSM 20472 / WAL 2508) (Peptostreptococcus magnus), this protein is Holo-[acyl-carrier-protein] synthase.